The primary structure comprises 398 residues: 4-hydroxy-3-methylbut-2-enyl diphosphate reductase (398 aa).

Cys66 lines the [4Fe-4S] cluster pocket. His96 provides a ligand contact to (2E)-4-hydroxy-3-methylbut-2-enyl diphosphate. His96 provides a ligand contact to dimethylallyl diphosphate. His96 is an isopentenyl diphosphate binding site. Cys157 serves as a coordination point for [4Fe-4S] cluster. His185 is a binding site for (2E)-4-hydroxy-3-methylbut-2-enyl diphosphate. His185 provides a ligand contact to dimethylallyl diphosphate. His185 provides a ligand contact to isopentenyl diphosphate. Glu187 (proton donor) is an active-site residue. Thr250 is a binding site for (2E)-4-hydroxy-3-methylbut-2-enyl diphosphate. Cys288 lines the [4Fe-4S] cluster pocket. (2E)-4-hydroxy-3-methylbut-2-enyl diphosphate-binding residues include Ser317, Ser318, Asn319, and Ser379. 4 residues coordinate dimethylallyl diphosphate: Ser317, Ser318, Asn319, and Ser379. Residues Ser317, Ser318, Asn319, and Ser379 each contribute to the isopentenyl diphosphate site.

Belongs to the IspH family. [4Fe-4S] cluster serves as cofactor.

It carries out the reaction isopentenyl diphosphate + 2 oxidized [2Fe-2S]-[ferredoxin] + H2O = (2E)-4-hydroxy-3-methylbut-2-enyl diphosphate + 2 reduced [2Fe-2S]-[ferredoxin] + 2 H(+). The catalysed reaction is dimethylallyl diphosphate + 2 oxidized [2Fe-2S]-[ferredoxin] + H2O = (2E)-4-hydroxy-3-methylbut-2-enyl diphosphate + 2 reduced [2Fe-2S]-[ferredoxin] + 2 H(+). It participates in isoprenoid biosynthesis; dimethylallyl diphosphate biosynthesis; dimethylallyl diphosphate from (2E)-4-hydroxy-3-methylbutenyl diphosphate: step 1/1. The protein operates within isoprenoid biosynthesis; isopentenyl diphosphate biosynthesis via DXP pathway; isopentenyl diphosphate from 1-deoxy-D-xylulose 5-phosphate: step 6/6. Functionally, catalyzes the conversion of 1-hydroxy-2-methyl-2-(E)-butenyl 4-diphosphate (HMBPP) into a mixture of isopentenyl diphosphate (IPP) and dimethylallyl diphosphate (DMAPP). Acts in the terminal step of the DOXP/MEP pathway for isoprenoid precursor biosynthesis. This chain is 4-hydroxy-3-methylbut-2-enyl diphosphate reductase, found in Synechococcus sp. (strain CC9311).